Consider the following 341-residue polypeptide: D-aspartate oxidase (341 aa).

Residues Asp36, Arg37, Thr43, Ser44, Met50, Gly307, Ile311, and Ser312 each coordinate FAD. Residues 339-341 (SKL) carry the Microbody targeting signal motif.

This sequence belongs to the DAMOX/DASOX family. Dimer or tetramer. Interacts with PEX5; the interaction is direct and required for localization of DDO to the peroxisome. The cofactor is FAD. Expressed in the small intestine (at protein level). Expressed in the ependymal cell layer of the telencephalic ventricles, hippocampus, thalamus, cerebellum, midbrain region, pons, olfactory bulbs, and cortex. Repressed in the testis. In terms of tissue distribution, expressed in the kidney, liver, stomach, pancreas, uterus, lactating breast, involuting mammary gland, brain, heart, lung, and skin. As to expression, expressed in kidney, liver, pancreas, and in the mammary gland regardless of lactation status.

It localises to the peroxisome matrix. It is found in the cytoplasm. The protein resides in the cytosol. It catalyses the reaction D-aspartate + O2 + H2O = oxaloacetate + H2O2 + NH4(+). It carries out the reaction D-glutamate + O2 + H2O = H2O2 + 2-oxoglutarate + NH4(+). Its activity is regulated as follows. Inhibited by the benzodiazepine olanzapine; chronic systemic administration of the benzodiazepine increases levels of D-aspartate and L-glutamate in the prefrontal cortex. Efficiently inhibited by 5-aminonicotinic acid (5-AN) and 1,4-Dihydropyrido[2,3-b]pyrazine-2,3-dione (DPPD). Inhibited by aminooxyacetic acid, thiolactomycin, anthranilic acid, malonate, meso-tartrate and L-tartrate. Benzoate has no effect on activity. Selectively catalyzes the oxidative deamination of acidic amino acids. Suppresses the level of D-aspartate in the brain, an amino acid that can act as an agonist for glutamate receptors. Protects the organism from the toxicity of D-amino acids. May also function in the intestine. Its function is as follows. Selectively catalyzes the oxidative deamination of acidic amino acids. Functionally, does not exhibit D-aspartate oxidase activity. This Mus musculus (Mouse) protein is D-aspartate oxidase (Ddo).